The sequence spans 366 residues: GTPase Obg (366 aa).

Residues 1–162 enclose the Obg domain; sequence MRFVDEAVIK…KSLRLELKIL (162 aa). The interval 125–150 is disordered; that stretch reads RGGKGNEHFKSSTMQAPRFSQPGEPG. Residues 163–335 form the OBG-type G domain; that stretch reads ADAGLLGLPN…VVSEMWRMLA (173 aa). GTP-binding positions include 169-176, 194-198, 218-221, 288-291, and 316-318; these read GLPNAGKS, FTTLV, DIPG, NKID, and SAL. 2 residues coordinate Mg(2+): Ser176 and Thr196.

This sequence belongs to the TRAFAC class OBG-HflX-like GTPase superfamily. OBG GTPase family. In terms of assembly, monomer. It depends on Mg(2+) as a cofactor.

The protein localises to the cytoplasm. An essential GTPase which binds GTP, GDP and possibly (p)ppGpp with moderate affinity, with high nucleotide exchange rates and a fairly low GTP hydrolysis rate. Plays a role in control of the cell cycle, stress response, ribosome biogenesis and in those bacteria that undergo differentiation, in morphogenesis control. This is GTPase Obg from Oleidesulfovibrio alaskensis (strain ATCC BAA-1058 / DSM 17464 / G20) (Desulfovibrio alaskensis).